The sequence spans 873 residues: Chitin synthase F (873 aa).

Residues 1–105 are disordered; that stretch reads MEDAHDQSSR…KSGSGLRRYP (105 aa). Composition is skewed to polar residues over residues 33–46, 58–72, and 80–98; these read SYPS…SQSL, ISSQ…QNPS, and ESEV…TKSG. The N-linked (GlcNAc...) asparagine glycan is linked to Asn506. 7 consecutive transmembrane segments (helical) span residues 532 to 554, 588 to 608, 621 to 641, 672 to 692, 702 to 722, 802 to 822, and 841 to 861; these read LVFL…FSLA, IVNN…FFLA, ILTF…SFYL, GLVL…SILY, SWAY…YAFC, LVLL…NDSV, and VILW…LWFL.

It belongs to the chitin synthase family. Class III subfamily.

The protein localises to the cell membrane. The enzyme catalyses [(1-&gt;4)-N-acetyl-beta-D-glucosaminyl](n) + UDP-N-acetyl-alpha-D-glucosamine = [(1-&gt;4)-N-acetyl-beta-D-glucosaminyl](n+1) + UDP + H(+). Polymerizes chitin, a structural polymer of the cell wall and septum, by transferring the sugar moiety of UDP-GlcNAc to the non-reducing end of the growing chitin polymer. Plays an important role in septal growth or maintenance. Mediates colony spore formation. This Aspergillus niger (strain ATCC MYA-4892 / CBS 513.88 / FGSC A1513) protein is Chitin synthase F.